The chain runs to 254 residues: 3-deoxy-manno-octulosonate cytidylyltransferase (254 aa).

Belongs to the KdsB family.

The protein localises to the cytoplasm. The catalysed reaction is 3-deoxy-alpha-D-manno-oct-2-ulosonate + CTP = CMP-3-deoxy-beta-D-manno-octulosonate + diphosphate. Its pathway is nucleotide-sugar biosynthesis; CMP-3-deoxy-D-manno-octulosonate biosynthesis; CMP-3-deoxy-D-manno-octulosonate from 3-deoxy-D-manno-octulosonate and CTP: step 1/1. It functions in the pathway bacterial outer membrane biogenesis; lipopolysaccharide biosynthesis. Functionally, activates KDO (a required 8-carbon sugar) for incorporation into bacterial lipopolysaccharide in Gram-negative bacteria. This Pseudomonas aeruginosa (strain UCBPP-PA14) protein is 3-deoxy-manno-octulosonate cytidylyltransferase.